The chain runs to 385 residues: 3-hydroxyisobutyryl-CoA hydrolase, mitochondrial (385 aa).

Substrate contacts are provided by glutamate 120, glycine 145, glutamate 168, and aspartate 176.

This sequence belongs to the enoyl-CoA hydratase/isomerase family.

It is found in the mitochondrion. It carries out the reaction 3-hydroxy-2-methylpropanoyl-CoA + H2O = 3-hydroxy-2-methylpropanoate + CoA + H(+). The protein operates within amino-acid degradation; L-valine degradation. Hydrolyzes 3-hydroxyisobutyryl-CoA (HIBYL-CoA), a saline catabolite. Has high activity toward isobutyryl-CoA. Could be an isobutyryl-CoA dehydrogenase that functions in valine catabolism. Also hydrolyzes 3-hydroxypropanoyl-CoA. This is 3-hydroxyisobutyryl-CoA hydrolase, mitochondrial (hibch) from Xenopus tropicalis (Western clawed frog).